A 590-amino-acid polypeptide reads, in one-letter code: Mitochondrial distribution and morphology protein 34 (590 aa).

The SMP-LTD domain occupies 1–225; it reads MSFIFNRETF…LPSVIFNMSQ (225 aa). A compositionally biased stretch (basic residues) spans 393–405; the sequence is RRKIKMRSRKPSK. Residues 393–456 form a disordered region; the sequence is RRKIKMRSRK…APEGGPNAED (64 aa). The segment covering 413-427 has biased composition (polar residues); that stretch reads PAQNDSGTSSCSNVA.

Belongs to the MDM34 family. In terms of assembly, component of the ER-mitochondria encounter structure (ERMES) or MDM complex, composed of MMM1, MDM10, MDM12 and MDM34.

It is found in the mitochondrion outer membrane. In terms of biological role, component of the ERMES/MDM complex, which serves as a molecular tether to connect the endoplasmic reticulum (ER) and mitochondria. Components of this complex are involved in the control of mitochondrial shape and protein biogenesis, and function in nonvesicular lipid trafficking between the ER and mitochondria. MDM34 is required for the interaction of the ER-resident membrane protein MMM1 and the outer mitochondrial membrane-resident beta-barrel protein MDM10. The polypeptide is Mitochondrial distribution and morphology protein 34 (Eremothecium gossypii (strain ATCC 10895 / CBS 109.51 / FGSC 9923 / NRRL Y-1056) (Yeast)).